We begin with the raw amino-acid sequence, 138 residues long: Ribulose bisphosphate carboxylase small subunit (138 aa).

Belongs to the RuBisCO small chain family. Heterohexadecamer of 8 large and 8 small subunits.

The protein resides in the plastid. Its subcellular location is the chloroplast. Its function is as follows. RuBisCO catalyzes two reactions: the carboxylation of D-ribulose 1,5-bisphosphate, the primary event in carbon dioxide fixation, as well as the oxidative fragmentation of the pentose substrate in the photorespiration process. Both reactions occur simultaneously and in competition at the same active site. Although the small subunit is not catalytic it is essential for maximal activity. The protein is Ribulose bisphosphate carboxylase small subunit of Porphyra purpurea (Red seaweed).